The sequence spans 538 residues: Probable bifunctional riboflavin biosynthesis protein RIBA 1, chloroplastic (538 aa).

A compositionally biased stretch (polar residues) spans 1–16; it reads MSRLSSIYSQHRTSGL. The disordered stretch occupies residues 1-29; the sequence is MSRLSSIYSQHRTSGLRSDRSIMPNSTSN. A chloroplast-targeting transit peptide spans 1–73; that stretch reads MSRLSSIYSQ…NGQASPSKVV (73 aa). The segment at 46–311 is DHBP synthase; that stretch reads RNFHISHAVG…IADLIRYRRK (266 aa). D-ribulose 5-phosphate is bound by residues 134–135, Asp-139, 249–253, and Glu-273; these read RE and RAGHT. Glu-135 contacts Mg(2+). His-252 lines the Mg(2+) pocket. The interval 312-530 is GTP cyclohydrolase II; sequence RDRLVERVCV…DGGIKKEQDQ (219 aa). Residue 362-366 coordinates GTP; the sequence is RVHSE. 3 residues coordinate Zn(2+): Cys-367, Cys-378, and Cys-380. GTP is bound by residues Gln-383, 406 to 408, and Thr-428; that span reads EGR. Asp-440 functions as the Proton acceptor; for GTP cyclohydrolase activity in the catalytic mechanism. The active-site Nucleophile; for GTP cyclohydrolase activity is Arg-442. GTP contacts are provided by Thr-463 and Lys-468. Residues 506–538 form a disordered region; that stretch reads HVYGTRPSGNTSTLADGGIKKEQDQIDSASEQE.

This sequence in the N-terminal section; belongs to the DHBP synthase family. The protein in the C-terminal section; belongs to the GTP cyclohydrolase II family. Mg(2+) serves as cofactor. Mn(2+) is required as a cofactor. The cofactor is Zn(2+).

It localises to the plastid. The protein resides in the chloroplast. It carries out the reaction D-ribulose 5-phosphate = (2S)-2-hydroxy-3-oxobutyl phosphate + formate + H(+). The catalysed reaction is GTP + 4 H2O = 2,5-diamino-6-hydroxy-4-(5-phosphoribosylamino)-pyrimidine + formate + 2 phosphate + 3 H(+). Its pathway is cofactor biosynthesis; riboflavin biosynthesis; 2-hydroxy-3-oxobutyl phosphate from D-ribulose 5-phosphate: step 1/1. It functions in the pathway cofactor biosynthesis; riboflavin biosynthesis; 5-amino-6-(D-ribitylamino)uracil from GTP: step 1/4. In terms of biological role, involved in riboflavin biosynthesis. Catalyzes both the conversion of D-ribulose 5-phosphate to formate and 3,4-dihydroxy-2-butanone 4-phosphate and the conversion of GTP to 2,5-diamino-6-ribosylamino-4(3H)-pyrimidinone 5'-phosphate (DARP), formate and pyrophosphate. This chain is Probable bifunctional riboflavin biosynthesis protein RIBA 1, chloroplastic (RIBA1), found in Oryza sativa subsp. japonica (Rice).